The chain runs to 447 residues: Probable glycine dehydrogenase (decarboxylating) subunit 1 (447 aa).

The protein belongs to the GcvP family. N-terminal subunit subfamily. In terms of assembly, the glycine cleavage system is composed of four proteins: P, T, L and H. In this organism, the P 'protein' is a heterodimer of two subunits.

It catalyses the reaction N(6)-[(R)-lipoyl]-L-lysyl-[glycine-cleavage complex H protein] + glycine + H(+) = N(6)-[(R)-S(8)-aminomethyldihydrolipoyl]-L-lysyl-[glycine-cleavage complex H protein] + CO2. In terms of biological role, the glycine cleavage system catalyzes the degradation of glycine. The P protein binds the alpha-amino group of glycine through its pyridoxal phosphate cofactor; CO(2) is released and the remaining methylamine moiety is then transferred to the lipoamide cofactor of the H protein. This chain is Probable glycine dehydrogenase (decarboxylating) subunit 1, found in Bacillus cereus (strain ATCC 10987 / NRS 248).